A 73-amino-acid chain; its full sequence is Large ribosomal subunit protein bL31 (73 aa).

This sequence belongs to the bacterial ribosomal protein bL31 family. Type A subfamily. Part of the 50S ribosomal subunit.

In terms of biological role, binds the 23S rRNA. The protein is Large ribosomal subunit protein bL31 of Rhizobium meliloti (strain 1021) (Ensifer meliloti).